The following is a 563-amino-acid chain: Arginine--tRNA ligase (563 aa).

Positions 108–118 match the 'HIGH' region motif; that stretch reads PNVAKEMHVGH.

Belongs to the class-I aminoacyl-tRNA synthetase family. In terms of assembly, monomer.

It localises to the cytoplasm. The catalysed reaction is tRNA(Arg) + L-arginine + ATP = L-arginyl-tRNA(Arg) + AMP + diphosphate. This Pasteurella multocida (strain Pm70) protein is Arginine--tRNA ligase (argS).